The sequence spans 63 residues: Crotasin (63 aa).

The first 22 residues, 1 to 22, serve as a signal peptide directing secretion; that stretch reads MKILYLLSAFLFLAFLSESGNA. 3 cysteine pairs are disulfide-bonded: cysteine 26–cysteine 56, cysteine 33–cysteine 50, and cysteine 38–cysteine 57.

Highly expressed in pancreas, heart, liver, brain and kidney. Expressed to a low extent in the venom gland.

Its subcellular location is the secreted. In Crotalus durissus terrificus (South American rattlesnake), this protein is Crotasin.